The following is a 396-amino-acid chain: Elongation factor Tu (396 aa).

In terms of domain architecture, tr-type G spans 10 to 206 (KPHVNIGTIG…AVDNYIPEPE (197 aa)). The G1 stretch occupies residues 19 to 26 (GHVDHGKT). 19–26 (GHVDHGKT) is a GTP binding site. Thr-26 provides a ligand contact to Mg(2+). The tract at residues 60–64 (GITIA) is G2. Positions 81–84 (DCPG) are G3. Residues 81–85 (DCPGH) and 136–139 (NKAD) contribute to the GTP site. Residues 136–139 (NKAD) form a G4 region. The G5 stretch occupies residues 174-176 (SAL).

It belongs to the TRAFAC class translation factor GTPase superfamily. Classic translation factor GTPase family. EF-Tu/EF-1A subfamily. Monomer.

The protein localises to the cytoplasm. It carries out the reaction GTP + H2O = GDP + phosphate + H(+). GTP hydrolase that promotes the GTP-dependent binding of aminoacyl-tRNA to the A-site of ribosomes during protein biosynthesis. The sequence is that of Elongation factor Tu from Geobacter sulfurreducens (strain ATCC 51573 / DSM 12127 / PCA).